We begin with the raw amino-acid sequence, 186 residues long: Lipid A acyltransferase PagP (186 aa).

Positions 1–19 are cleaved as a signal peptide; it reads MKRLISCLTIICALNRSAA. Active-site residues include H60, D103, and S104.

Belongs to the lipid A palmitoyltransferase family. In terms of assembly, homodimer.

The protein localises to the cell outer membrane. The catalysed reaction is a lipid A + a 1,2-diacyl-sn-glycero-3-phosphocholine = a hepta-acyl lipid A + a 2-acyl-sn-glycero-3-phosphocholine. The enzyme catalyses a lipid IVA + a 1,2-diacyl-sn-glycero-3-phosphocholine = a lipid IVB + a 2-acyl-sn-glycero-3-phosphocholine. It carries out the reaction a lipid IIA + a 1,2-diacyl-sn-glycero-3-phosphocholine = a lipid IIB + a 2-acyl-sn-glycero-3-phosphocholine. Its function is as follows. Transfers a fatty acid residue from the sn-1 position of a phospholipid to the N-linked hydroxyfatty acid chain on the proximal unit of lipid A or its precursors. Confers resistance to cationic antimicrobial peptides (CAMPs). Promotes the ability of L.pneumophila to replicate and/or survive in macrophages. Important for ability to kill macrophages and to promote the virulence. This chain is Lipid A acyltransferase PagP, found in Legionella pneumophila.